Consider the following 115-residue polypeptide: Meiotically up-regulated gene 106 protein (115 aa).

An N-terminal signal peptide occupies residues 1–34 (MSIKVEWIKFTRLKKCATLLVQLSLLRYRYMVLA). The next 2 membrane-spanning stretches (helical) occupy residues 41–60 (CIVVTIYCGCLFWFSNGALF) and 81–103 (GVKLKIFLFTILLAFETNTFTPY).

The protein resides in the membrane. Functionally, has a role in meiosis. This chain is Meiotically up-regulated gene 106 protein (mug106), found in Schizosaccharomyces pombe (strain 972 / ATCC 24843) (Fission yeast).